The following is a 245-amino-acid chain: Exosome complex component RRP41 (245 aa).

N-acetylalanine is present on Ala2.

It belongs to the RNase PH family. In terms of assembly, component of the RNA exosome core complex (Exo-9), composed of EXOSC1, EXOSC2, EXOSC3, EXOSC4, EXOSC5, EXOSC6, EXOSC7, EXOSC8 and EXOSC9; within the complex interacts with EXOSC2, EXOSC7 and EXOSC9. The catalytically inactive RNA exosome core complex (Exo-9) associates with the catalytic subunit EXOSC10/RRP6. Exo-9 may associate with DIS3 to form the nucleolar exosome complex, or DIS3L to form the cytoplasmic exosome complex. Exo-9 is formed by a hexameric base ring consisting of the heterodimers EXOSC4-EXOSC9, EXOSC5-EXOSC8 and EXOSC6-EXOSC7, and a cap ring consisting of EXOSC1, EXOSC2 and EXOSC3. The RNA exosome complex associates with cofactors C1D/RRP47, MPHOSPH6/MPP6 and MTREX/MTR4. Interacts with DDX60. Interacts with DIS3; the interaction is direct.

The protein localises to the cytoplasm. Its subcellular location is the nucleus. The protein resides in the nucleolus. It localises to the nucleoplasm. In terms of biological role, non-catalytic component of the RNA exosome complex which has 3'-&gt;5' exoribonuclease activity and participates in a multitude of cellular RNA processing and degradation events. In the nucleus, the RNA exosome complex is involved in proper maturation of stable RNA species such as rRNA, snRNA and snoRNA, in the elimination of RNA processing by-products and non-coding 'pervasive' transcripts, such as antisense RNA species and promoter-upstream transcripts (PROMPTs), and of mRNAs with processing defects, thereby limiting or excluding their export to the cytoplasm. The RNA exosome may be involved in Ig class switch recombination (CSR) and/or Ig variable region somatic hypermutation (SHM) by targeting AICDA deamination activity to transcribed dsDNA substrates. In the cytoplasm, the RNA exosome complex is involved in general mRNA turnover and specifically degrades inherently unstable mRNAs containing AU-rich elements (AREs) within their 3' untranslated regions, and in RNA surveillance pathways, preventing translation of aberrant mRNAs. It seems to be involved in degradation of histone mRNA. The catalytic inactive RNA exosome core complex of 9 subunits (Exo-9) is proposed to play a pivotal role in the binding and presentation of RNA for ribonucleolysis, and to serve as a scaffold for the association with catalytic subunits and accessory proteins or complexes. EXOSC4 binds to ARE-containing RNAs. In Mus musculus (Mouse), this protein is Exosome complex component RRP41 (Exosc4).